A 148-amino-acid chain; its full sequence is Putative nickel-responsive regulator (148 aa).

Ni(2+)-binding residues include His-77, His-88, His-90, and Cys-96.

It belongs to the transcriptional regulatory CopG/NikR family. It depends on Ni(2+) as a cofactor.

Its function is as follows. Transcriptional regulator. The sequence is that of Putative nickel-responsive regulator from Bradyrhizobium diazoefficiens (strain JCM 10833 / BCRC 13528 / IAM 13628 / NBRC 14792 / USDA 110).